A 44-amino-acid polypeptide reads, in one-letter code: Defensin heliomicin (44 aa).

3 cysteine pairs are disulfide-bonded: Cys7–Cys32, Cys18–Cys40, and Cys22–Cys42.

It is found in the secreted. This peptide has potent anti-fungal activity. Has no activity against Gram-negative and Gram-positive bacteria. The chain is Defensin heliomicin from Heliothis virescens (Tobacco budworm moth).